Consider the following 480-residue polypeptide: Aromatic-L-amino-acid decarboxylase (480 aa).

Lysine 292 is modified (N6-(pyridoxal phosphate)lysine).

The protein belongs to the group II decarboxylase family. Pyridoxal 5'-phosphate serves as cofactor.

It carries out the reaction L-tryptophan + H(+) = tryptamine + CO2. The enzyme catalyses L-phenylalanine + H(+) = 2-phenylethylamine + CO2. It catalyses the reaction 5-hydroxy-L-tryptophan + H(+) = serotonin + CO2. The catalysed reaction is L-dopa + H(+) = dopamine + CO2. Involved in bacillamide C biosynthesis. Catalyzes the decarboxylation of L-tryptophan to tryptamine. The tryptamine obtained is then probably incorporated into the bacillamide C peptide, which is derived from the amino acids alanine, cysteine and tryptophan through nonribosomal peptide synthetase (NRPS) biosynthesis strategy. L-tryptophan is the best substrate, but the enzyme displays broad substrate specificity for various aromatic amino acids in vitro and it can also catalyze the decarboxylation of L-phenylalanine, 5-hydroxy-L-tryptophan (L-HTP) and L-DOPA, with lower efficiency. Exhibits weak activity with L-tyrosine. This chain is Aromatic-L-amino-acid decarboxylase, found in Bacillus atrophaeus.